The sequence spans 195 residues: Thymidine kinase (195 aa).

Residues 15 to 22, Glu-23, 57 to 58, and 88 to 91 each bind ATP; these read GPMYSGKS, SH, and DEVQ. Glu-89 serves as the catalytic Proton acceptor. Phe-120 is a substrate binding site. Residues Cys-145 and Cys-148 each coordinate Zn(2+). Residue Tyr-179 coordinates substrate. Residues Cys-183 and Cys-186 each contribute to the Zn(2+) site.

Belongs to the thymidine kinase family.

The protein localises to the cytoplasm. It catalyses the reaction thymidine + ATP = dTMP + ADP + H(+). The chain is Thymidine kinase from Clostridium acetobutylicum (strain ATCC 824 / DSM 792 / JCM 1419 / IAM 19013 / LMG 5710 / NBRC 13948 / NRRL B-527 / VKM B-1787 / 2291 / W).